A 951-amino-acid polypeptide reads, in one-letter code: Glycine dehydrogenase (decarboxylating) 1 (951 aa).

An N6-(pyridoxal phosphate)lysine modification is found at Lys-703.

The protein belongs to the GcvP family. In terms of assembly, the glycine cleavage system is composed of four proteins: P, T, L and H. Pyridoxal 5'-phosphate is required as a cofactor.

It catalyses the reaction N(6)-[(R)-lipoyl]-L-lysyl-[glycine-cleavage complex H protein] + glycine + H(+) = N(6)-[(R)-S(8)-aminomethyldihydrolipoyl]-L-lysyl-[glycine-cleavage complex H protein] + CO2. The glycine cleavage system catalyzes the degradation of glycine. The P protein binds the alpha-amino group of glycine through its pyridoxal phosphate cofactor; CO(2) is released and the remaining methylamine moiety is then transferred to the lipoamide cofactor of the H protein. This is Glycine dehydrogenase (decarboxylating) 1 (gcvP1) from Pseudomonas putida (strain ATCC 47054 / DSM 6125 / CFBP 8728 / NCIMB 11950 / KT2440).